A 149-amino-acid polypeptide reads, in one-letter code: MSKKASILVIQGPNLNLLGSRESDVYGKTTLEDIHQKLGELATAQSVDLSTYQSNHEGELIDRIQKAKQDGVDFIIINPGAFTHTSVALRDVLAGVAIPFTEVHLSNIHQREEFRKHSYLSDIATGVICGLGAIGYELALQAAITRIKK.

The active-site Proton acceptor is the Tyr-26. Substrate contacts are provided by Asn-78, His-84, and Asp-91. The active-site Proton donor is His-104. Substrate-binding positions include 105–106 (LS) and Arg-115.

It belongs to the type-II 3-dehydroquinase family. In terms of assembly, homododecamer.

The catalysed reaction is 3-dehydroquinate = 3-dehydroshikimate + H2O. Its pathway is metabolic intermediate biosynthesis; chorismate biosynthesis; chorismate from D-erythrose 4-phosphate and phosphoenolpyruvate: step 3/7. Functionally, catalyzes a trans-dehydration via an enolate intermediate. The polypeptide is 3-dehydroquinate dehydratase (Polynucleobacter necessarius subsp. necessarius (strain STIR1)).